We begin with the raw amino-acid sequence, 441 residues long: MHIAVVGLSHRTAPVEVREKLSIPEELVERSFNNLKKIDQILEVSILSTCNRLEIYSLVKDPQLGIEAIKSFLLEFSGLEDEILSPHLFNYVQEKAVSHVMRVSAGLDSLVLGEGQILSQVKKMVRLGQDHHSLGPILNRLLTQAVSTGKRVRSETNLGTGAVSISSAAVELAQLKLGQAHGRDQLMTLETEKVAVVGAGRMSRLLLQHLQSKGCCSLTLLNRTRKRAEDLSAAFPDIQIDCQLIDELDSCLSLSTLVFTSTAANEPIIDAEKLINIDRKPLLRLIDIGVPRNISSDAKSVSGIESHDVDDLQEVVSRNQEARQKLALEAEGLIEEECRVFLEWWDSLAAVPTINCLRSSLESIRKEELQKALSRMGPDFSARERKVVEALSKGIINKILHTPVTKLRAPQSRNDRRDSLDVIEKLFNLDVSSSLNKPKNN.

Substrate-binding positions include 49 to 52, S109, 114 to 116, and Q120; these read TCNR and EGQ. Residue C50 is the Nucleophile of the active site. 198 to 203 is an NADP(+) binding site; it reads GAGRMS.

It belongs to the glutamyl-tRNA reductase family. Homodimer.

It catalyses the reaction (S)-4-amino-5-oxopentanoate + tRNA(Glu) + NADP(+) = L-glutamyl-tRNA(Glu) + NADPH + H(+). Its pathway is porphyrin-containing compound metabolism; protoporphyrin-IX biosynthesis; 5-aminolevulinate from L-glutamyl-tRNA(Glu): step 1/2. It functions in the pathway porphyrin-containing compound metabolism; chlorophyll biosynthesis. Functionally, catalyzes the NADPH-dependent reduction of glutamyl-tRNA(Glu) to glutamate 1-semialdehyde (GSA). This chain is Glutamyl-tRNA reductase, found in Prochlorococcus marinus (strain NATL1A).